A 212-amino-acid polypeptide reads, in one-letter code: Small ribosomal subunit protein uS19m (212 aa).

A mitochondrion-targeting transit peptide spans 1-29; sequence MAFCTKLGGHWKQGVNVPVSSMLGSLRYM. The region spanning 31 to 109 is the RRM domain; that stretch reads TKLYIGGLSP…FNISVNVAKD (79 aa).

This sequence belongs to the universal ribosomal protein uS19 family. Component of the mitochondrial ribosome small subunit.

It is found in the mitochondrion. In terms of biological role, the RNA-binding domain found in RPS19 may functionally replace the missing mitochondrial RPS13. The chain is Small ribosomal subunit protein uS19m (RPS19) from Arabidopsis thaliana (Mouse-ear cress).